Here is a 260-residue protein sequence, read N- to C-terminus: Proline-rich protein 33 (260 aa).

The segment at 29–132 is disordered; it reads GVQTVSPRPE…KVAPKPSRSG (104 aa). Pro residues predominate over residues 73 to 83; that stretch reads GPSPYSPPPAA.

The chain is Proline-rich protein 33 (Prr33) from Mus musculus (Mouse).